The primary structure comprises 513 residues: Pantetheinase (513 aa).

A signal peptide spans Met1 to Cys21. An N-linked (GlcNAc...) asparagine glycan is attached at Asn38. The CN hydrolase domain maps to Ala39–Ser306. The Proton acceptor role is filled by Glu79. The N-linked (GlcNAc...) asparagine glycan is linked to Asn130. Lys178 (proton donor) is an active-site residue. Asn200 carries N-linked (GlcNAc...) asparagine glycosylation. Cys211 acts as the Nucleophile in catalysis. Residues Asn283, Asn315, and Asn353 are each glycosylated (N-linked (GlcNAc...) asparagine). Residue Gly491 is the site of GPI-anchor amidated glycine attachment. A propeptide spans Leu492–Trp513 (removed in mature form).

Belongs to the carbon-nitrogen hydrolase superfamily. BTD/VNN family. As to quaternary structure, monomer. Widely expressed with higher expression in spleen, kidney and blood. Overexpressed in lesional psoriatic skin.

The protein localises to the cell membrane. It carries out the reaction (R)-pantetheine + H2O = cysteamine + (R)-pantothenate. Its function is as follows. Amidohydrolase that hydrolyzes specifically one of the carboamide linkages in D-pantetheine thus recycling pantothenic acid (vitamin B5) and releasing cysteamine. In Homo sapiens (Human), this protein is Pantetheinase (VNN1).